Consider the following 535-residue polypeptide: Signal transduction histidine-protein kinase AfsQ2 (535 aa).

Residues 1–30 are Cytoplasmic-facing; the sequence is MTREHQGGTRGLAAARKGFWSGLRFTSLRL. The chain crosses the membrane as a helical span at residues 31–52; it reads RLVLVFGLVALTAAVSASGIAY. The Extracellular portion of the chain corresponds to 53-198; the sequence is WLNREAVLTR…SLEPEAKDLN (146 aa). A helical membrane pass occupies residues 199–219; it reads SLAWSLGIATALALLGSALLA. The Cytoplasmic segment spans residues 220-535; sequence QALATTVLKP…DRGKDAKGQV (316 aa). The 53-residue stretch at 224 to 276 folds into the HAMP domain; that stretch reads TTVLKPVHRLGVAARRLGEGKLDTRLRVSGTDELADLSRTFNSAAENLEKRVA. The 220-residue stretch at 291–510 folds into the Histidine kinase domain; sequence DMSHELRTPL…VFTLRLPQDP (220 aa). H294 carries the post-translational modification Phosphohistidine. Residues 493–535 form a disordered region; that stretch reads ENAPEGGAVFTLRLPQDPSPPADEDGGPDEETEDRGKDAKGQV. The span at 514-525 shows a compositional bias: acidic residues; it reads ADEDGGPDEETE. A compositionally biased stretch (basic and acidic residues) spans 526-535; sequence DRGKDAKGQV.

Its subcellular location is the cell membrane. It carries out the reaction ATP + protein L-histidine = ADP + protein N-phospho-L-histidine.. In terms of biological role, forms part of a two-component regulatory system AfsQ1/AfsQ2 involved in secondary metabolism. May activate AfsQ1 by phosphorylation. This is Signal transduction histidine-protein kinase AfsQ2 (afsQ2) from Streptomyces coelicolor (strain ATCC BAA-471 / A3(2) / M145).